The sequence spans 263 residues: Hydroxyethylthiazole kinase (263 aa).

Methionine 39 is a substrate binding site. Lysine 115 and threonine 160 together coordinate ATP. Substrate is bound at residue glycine 187.

Belongs to the Thz kinase family. Requires Mg(2+) as cofactor.

The catalysed reaction is 5-(2-hydroxyethyl)-4-methylthiazole + ATP = 4-methyl-5-(2-phosphooxyethyl)-thiazole + ADP + H(+). It functions in the pathway cofactor biosynthesis; thiamine diphosphate biosynthesis; 4-methyl-5-(2-phosphoethyl)-thiazole from 5-(2-hydroxyethyl)-4-methylthiazole: step 1/1. Catalyzes the phosphorylation of the hydroxyl group of 4-methyl-5-beta-hydroxyethylthiazole (THZ). The chain is Hydroxyethylthiazole kinase from Staphylococcus haemolyticus (strain JCSC1435).